A 457-amino-acid chain; its full sequence is 4-hydroxybenzoate transporter PcaK (457 aa).

Over 1–34 the chain is Cytoplasmic; that stretch reads MPKEANMASQDYATQRSSLDAQALINDAPLSRYQ. A helical membrane pass occupies residues 35-55; that stretch reads WLIAIVCFLIVFVDGIDTAAM. Residues 56-72 lie on the Periplasmic side of the membrane; the sequence is GFIAPALAQDWGVDRSQ. Residues 73–93 form a helical membrane-spanning segment; sequence LGPVMSAALGGMIIGALVSGP. Residues 94–101 lie on the Cytoplasmic side of the membrane; it reads TADRFGRK. Residues 102–122 form a helical membrane-spanning segment; it reads IVLSMSMLVFGGFTLACAYST. Residues 123-128 lie on the Periplasmic side of the membrane; it reads NLDSLV. Residues 129-149 traverse the membrane as a helical segment; it reads IFRFLTGIGLGAAMPNATTLF. The Cytoplasmic segment spans residues 150–168; that stretch reads SEYCPARIRSLLVTCMFCG. A helical membrane pass occupies residues 169-189; that stretch reads YNLGMAIGGFISSWLIPAFGW. At 190 to 191 the chain is on the periplasmic side; it reads HS. The chain crosses the membrane as a helical span at residues 192 to 212; that stretch reads LFLLGGWAPLILMLLVIFFLP. Topologically, residues 213–274 are cytoplasmic; that stretch reads ESYRFLIVKG…LFSAKYVKGT (62 aa). A helical membrane pass occupies residues 275–295; the sequence is VLLWVTYFMGLVMIYLLTSWL. Residues 296–310 are Periplasmic-facing; it reads PTLMRETGASLERAA. A helical membrane pass occupies residues 311–331; it reads FLGGLFQFGGVLSALFIGWAM. Residues 332–338 lie on the Cytoplasmic side of the membrane; sequence DRFNPNR. Residues 339 to 359 traverse the membrane as a helical segment; sequence IIAGFYLAAGIFAVIVGQSLS. The Periplasmic segment spans residues 360–363; it reads NPTL. Residues 364 to 384 traverse the membrane as a helical segment; that stretch reads LALFILCAGIAVNGAQSSMPV. Over 385 to 400 the chain is Cytoplasmic; it reads LSARFYPTQCRATGVA. Residues 401–421 form a helical membrane-spanning segment; it reads WMSGIGRFGAVFGAWIGAVLL. Over 422-426 the chain is Periplasmic; that stretch reads GNNWS. The helical transmembrane segment at 427 to 447 threads the bilayer; that stretch reads FTMILSMLIIPAAAAAIAIFV. Over 448-457 the chain is Cytoplasmic; that stretch reads KSLVAHTDAT.

Belongs to the major facilitator superfamily. Aromatic acid:H(+) symporter (AAHS) (TC 2.A.1.15) family. In terms of assembly, homotrimer.

It localises to the cell inner membrane. Its function is as follows. Uptake of 4-hydroxybenzoate (4-HB). Can also transport a variety of aromatic acids with hydroxyl substitutions at the 2-, 3- and 4-positions, such as salicylate, 2,4-dihydroxybenzoate, protocatechuate, 3-hydroxybenzoate, vanillate and gentisate. The sequence is that of 4-hydroxybenzoate transporter PcaK from Acinetobacter baylyi (strain ATCC 33305 / BD413 / ADP1).